A 505-amino-acid polypeptide reads, in one-letter code: AMP phosphorylase (505 aa).

Residues G170, 196–201, and T205 each bind AMP; that span reads SRAITS. D258 acts as the Proton donor in catalysis. AMP-binding residues include S266 and K290.

The protein belongs to the thymidine/pyrimidine-nucleoside phosphorylase family. Type 2 subfamily.

The catalysed reaction is AMP + phosphate = alpha-D-ribose 1,5-bisphosphate + adenine. It carries out the reaction CMP + phosphate = cytosine + alpha-D-ribose 1,5-bisphosphate. The enzyme catalyses UMP + phosphate = alpha-D-ribose 1,5-bisphosphate + uracil. Catalyzes the conversion of AMP and phosphate to adenine and ribose 1,5-bisphosphate (R15P). Exhibits phosphorylase activity toward CMP and UMP in addition to AMP. Functions in an archaeal AMP degradation pathway, together with R15P isomerase and RubisCO. The polypeptide is AMP phosphorylase (Methanococcus maripaludis (strain DSM 14266 / JCM 13030 / NBRC 101832 / S2 / LL)).